The chain runs to 174 residues: Gamma-crystallin D (174 aa).

Beta/gamma crystallin 'Greek key' domains lie at 2-40 (GKITFYEDRGFQGRHYECSTDHSNLQPYFSRCNSVRVDS) and 41-83 (GCWM…RLIP). The interval 84–87 (HAGS) is connecting peptide. Beta/gamma crystallin 'Greek key' domains lie at 88 to 128 (HRIR…NVLE) and 129 to 171 (GCWV…RRVM).

The protein belongs to the beta/gamma-crystallin family. As to expression, detected in the superior olivary complex and fibers of the ventral aoustic stria of the auditory hindbrain.

Functionally, crystallins are the dominant structural components of the vertebrate eye lens. This chain is Gamma-crystallin D (Crygd), found in Rattus norvegicus (Rat).